A 359-amino-acid chain; its full sequence is tRNA N6-adenosine threonylcarbamoyltransferase (359 aa).

Residues H121 and H125 each contribute to the Fe cation site. Residues 143 to 147 (LVSGG), D176, G189, and N286 each bind substrate. Fe cation is bound at residue D311.

The protein belongs to the KAE1 / TsaD family. It depends on Fe(2+) as a cofactor.

Its subcellular location is the cytoplasm. The catalysed reaction is L-threonylcarbamoyladenylate + adenosine(37) in tRNA = N(6)-L-threonylcarbamoyladenosine(37) in tRNA + AMP + H(+). In terms of biological role, required for the formation of a threonylcarbamoyl group on adenosine at position 37 (t(6)A37) in tRNAs that read codons beginning with adenine. Is involved in the transfer of the threonylcarbamoyl moiety of threonylcarbamoyl-AMP (TC-AMP) to the N6 group of A37, together with TsaE and TsaB. TsaD likely plays a direct catalytic role in this reaction. This Jannaschia sp. (strain CCS1) protein is tRNA N6-adenosine threonylcarbamoyltransferase.